The primary structure comprises 209 residues: Ribosomal RNA small subunit methyltransferase G (209 aa).

S-adenosyl-L-methionine contacts are provided by G74, F79, and R139.

Belongs to the methyltransferase superfamily. RNA methyltransferase RsmG family.

Its subcellular location is the cytoplasm. It catalyses the reaction guanosine(527) in 16S rRNA + S-adenosyl-L-methionine = N(7)-methylguanosine(527) in 16S rRNA + S-adenosyl-L-homocysteine. Its function is as follows. Specifically methylates the N7 position of guanine in position 527 of 16S rRNA. The polypeptide is Ribosomal RNA small subunit methyltransferase G (Halorhodospira halophila (strain DSM 244 / SL1) (Ectothiorhodospira halophila (strain DSM 244 / SL1))).